We begin with the raw amino-acid sequence, 204 residues long: Methylthioribulose-1-phosphate dehydratase (204 aa).

Zn(2+) contacts are provided by His94 and His96.

This sequence belongs to the aldolase class II family. MtnB subfamily. Zn(2+) is required as a cofactor.

The enzyme catalyses 5-(methylsulfanyl)-D-ribulose 1-phosphate = 5-methylsulfanyl-2,3-dioxopentyl phosphate + H2O. It participates in amino-acid biosynthesis; L-methionine biosynthesis via salvage pathway; L-methionine from S-methyl-5-thio-alpha-D-ribose 1-phosphate: step 2/6. In terms of biological role, catalyzes the dehydration of methylthioribulose-1-phosphate (MTRu-1-P) into 2,3-diketo-5-methylthiopentyl-1-phosphate (DK-MTP-1-P). The polypeptide is Methylthioribulose-1-phosphate dehydratase (Cronobacter sakazakii (strain ATCC BAA-894) (Enterobacter sakazakii)).